The primary structure comprises 881 residues: Disks large homolog 2 (881 aa).

Disordered regions lie at residues 16–41 (HRQQ…MNPA) and 63–88 (LSTT…SFPR). 3 PDZ domains span residues 155-242 (EITL…RRRR), 250-337 (EIKL…GKPT), and 424-505 (KIVL…QYRP). The SH3 domain maps to 539–609 (KRSLYVRALF…PSKRRVERKE (71 aa)). The 184-residue stretch at 683–866 (ARPVIILGPM…IYNQCKMVIE (184 aa)) folds into the Guanylate kinase-like domain. Positions 709-729 (GSCVPPANSSDQEDTTRPKRD) are disordered.

Belongs to the MAGUK family.

The protein resides in the cell membrane. Its subcellular location is the postsynaptic density. It localises to the synapse. It is found in the membrane. The protein localises to the cell projection. The protein resides in the axon. Its subcellular location is the perikaryon. Its function is as follows. May play a role in synapse assembly and function. This Danio rerio (Zebrafish) protein is Disks large homolog 2 (dlg2).